The sequence spans 1158 residues: Teashirt homolog 1 (1158 aa).

3 disordered regions span residues 70-126, 170-228, and 310-341; these read DDGR…DMDT, INST…ANNG, and TGHY…EMEG. Residues 76 to 88 show a composition bias toward polar residues; sequence LSYQNSPLSNGTN. Low complexity-rich tracts occupy residues 186 to 205 and 213 to 228; these read SHAS…ASAS and SSNS…ANNG. 2 C2H2-type zinc fingers span residues 288–312 and 349–373; these read FRCK…ETGH and LKCM…KTKH. The segment covering 310–326 has biased composition (basic and acidic residues); the sequence is TGHYRDDNKDKEEDRGK. The tract at residues 405–425 is disordered; it reads PCSPDSISSTPGIPLAETAPT. The segment at 461 to 485 adopts a C2H2-type 3 zinc-finger fold; that stretch reads LKCMECGSSHDTLQQLTAHMMVTGH. Disordered regions lie at residues 516–573, 656–681, and 693–748; these read PPTT…VEKS, LKSL…NHKS, and VTGK…VDKD. A compositionally biased stretch (basic and acidic residues) spans 555–573; it reads EEKKIKQEKEDPSERVEKS. A compositionally biased stretch (low complexity) spans 656–671; sequence LKSLTSDSSTLIHSPS. Basic and acidic residues-rich tracts occupy residues 693 to 716 and 724 to 748; these read VTGK…KHLT and LKER…VDKD. Positions 963–1033 form a DNA-binding region, homeobox; sequence RKGRQSNWNP…NVKYQLRRTG (71 aa). C2H2-type zinc fingers lie at residues 1048–1070 and 1115–1138; these read FLCS…LESH and FQCK…SKTH.

The protein belongs to the teashirt C2H2-type zinc-finger protein family.

It localises to the nucleus. In terms of biological role, probable transcriptional regulator involved in developmental processes. May act as a transcriptional repressor (Potential). In Danio rerio (Zebrafish), this protein is Teashirt homolog 1 (tshz1).